We begin with the raw amino-acid sequence, 155 residues long: Leader peptidase HopD (155 aa).

This sequence belongs to the peptidase A24 family.

The chain is Leader peptidase HopD (hopD) from Salmonella typhimurium (strain LT2 / SGSC1412 / ATCC 700720).